A 470-amino-acid polypeptide reads, in one-letter code: Carboxypeptidase Q (470 aa).

An N-terminal signal peptide occupies residues 1-18; the sequence is MRSLFFLFIVHLLALGSG. Residues 19 to 42 constitute a propeptide that is removed on maturation; sequence KAVFKNGVSQRTFREIKEEIANYE. The N-linked (GlcNAc...) asparagine glycan is linked to asparagine 59. Residues histidine 288 and aspartate 300 each coordinate Zn(2+). Glutamate 334 functions as the Nucleophile in the catalytic mechanism. A Zn(2+)-binding site is contributed by glutamate 335. N-linked (GlcNAc...) asparagine glycosylation occurs at asparagine 351. Aspartate 362 provides a ligand contact to Zn(2+). Asparagine 394 is a glycosylation site (N-linked (GlcNAc...) asparagine). Histidine 432 serves as a coordination point for Zn(2+).

It belongs to the peptidase M28 family. As to quaternary structure, homodimer. The monomeric form is inactive while the homodimer is active. Post-translationally, N-glycosylated. The secreted form is modified by hybrid or complex type oligosaccharide chains.

Its subcellular location is the endoplasmic reticulum. It localises to the golgi apparatus. It is found in the lysosome. The protein resides in the secreted. Carboxypeptidase that may play an important role in the hydrolysis of circulating peptides. Catalyzes the hydrolysis of dipeptides with unsubstituted terminals into amino acids. May play a role in the liberation of thyroxine hormone from its thyroglobulin (Tg) precursor. This chain is Carboxypeptidase Q (Cpq), found in Mus musculus (Mouse).